The sequence spans 804 residues: Leucine--tRNA ligase (804 aa).

The 'HIGH' region motif lies at 39 to 50 (PYPSGKGLHVGH). The short motif at 573-577 (KMSKS) is the 'KMSKS' region element. Lys-576 is a binding site for ATP.

Belongs to the class-I aminoacyl-tRNA synthetase family.

The protein resides in the cytoplasm. It carries out the reaction tRNA(Leu) + L-leucine + ATP = L-leucyl-tRNA(Leu) + AMP + diphosphate. This Lactobacillus delbrueckii subsp. bulgaricus (strain ATCC BAA-365 / Lb-18) protein is Leucine--tRNA ligase.